The primary structure comprises 255 residues: Imidazole glycerol phosphate synthase subunit HisF (255 aa).

Catalysis depends on residues Asp-11 and Asp-130.

The protein belongs to the HisA/HisF family. Heterodimer of HisH and HisF.

The protein resides in the cytoplasm. The enzyme catalyses 5-[(5-phospho-1-deoxy-D-ribulos-1-ylimino)methylamino]-1-(5-phospho-beta-D-ribosyl)imidazole-4-carboxamide + L-glutamine = D-erythro-1-(imidazol-4-yl)glycerol 3-phosphate + 5-amino-1-(5-phospho-beta-D-ribosyl)imidazole-4-carboxamide + L-glutamate + H(+). It participates in amino-acid biosynthesis; L-histidine biosynthesis; L-histidine from 5-phospho-alpha-D-ribose 1-diphosphate: step 5/9. In terms of biological role, IGPS catalyzes the conversion of PRFAR and glutamine to IGP, AICAR and glutamate. The HisF subunit catalyzes the cyclization activity that produces IGP and AICAR from PRFAR using the ammonia provided by the HisH subunit. This Campylobacter jejuni (strain RM1221) protein is Imidazole glycerol phosphate synthase subunit HisF.